We begin with the raw amino-acid sequence, 779 residues long: Transcription activator of gluconeogenesis BDCG_02812 (779 aa).

The interval 1 to 70 (MTASTRNGSP…NAKDPLRPRR (70 aa)) is disordered. Residues 25-61 (KSMTTTPANPPETKSQTNGKGSGTAQSSQKPASTSAN) are compositionally biased toward polar residues. The zn(2)-C6 fungal-type DNA-binding region spans 77–105 (CFACQRAHLTCGDERPCQRCIKRGLQDAC). 6 disordered regions span residues 135 to 163 (QANTTRNIPNQRGNASNSNSNKVSRQSVS), 202 to 239 (SVFHAQSPSSTQNFDLSSNPQTQNLSSAMSQTASSVSG), 285 to 344 (GAGD…ANPR), 401 to 421 (TNLMHPTNTPQQSRISTPGLK), 559 to 590 (GSSLSSASSVRGSSTFTPRNNNTHNSIDPHTG), and 655 to 732 (FHGK…QTWG). Residues 202-226 (SVFHAQSPSSTQNFDLSSNPQTQNL) show a composition bias toward polar residues. Positions 227–238 (SSAMSQTASSVS) are enriched in low complexity. 3 stretches are compositionally biased toward polar residues: residues 291-322 (PSDSATQRGSIGRSSGTFTAQNFGDSANNQSP), 333-344 (WNPTGQGQANPR), and 401-416 (TNLMHPTNTPQQSRIS). Low complexity predominate over residues 560–572 (SSLSSASSVRGSS). Positions 573–586 (TFTPRNNNTHNSID) are enriched in polar residues. Over residues 672–719 (TGTTTSGDVATTTATGTSTSNGANANTNGNNTNPNDPSSAASSSASSA) the composition is skewed to low complexity. Polar residues predominate over residues 720–729 (LQGPQQSPRQ).

This sequence belongs to the ERT1/acuK family.

It localises to the nucleus. In terms of biological role, transcription factor which regulates nonfermentable carbon utilization. Activator of gluconeogenetic genes. In Ajellomyces dermatitidis (strain ER-3 / ATCC MYA-2586) (Blastomyces dermatitidis), this protein is Transcription activator of gluconeogenesis BDCG_02812.